We begin with the raw amino-acid sequence, 998 residues long: Ephrin type-B receptor 3 (998 aa).

The N-terminal stretch at 1–33 is a signal peptide; sequence MARARPPPPPSPPPGLLPLLPPLLLLPLLLLPA. Topologically, residues 34–559 are extracellular; sequence GCRALEETLM…AQQLQEQLPL (526 aa). Residues 39 to 217 form the Eph LBD domain; that stretch reads EETLMDTKWV…FYKKCASTTA (179 aa). A disulfide bridge connects residues C81 and C199. Fibronectin type-III domains follow at residues 339–451 and 452–545; these read VPSP…TNQA and APSE…TTSE. 2 N-linked (GlcNAc...) asparagine glycosylation sites follow: N351 and N445. Residues 560–580 traverse the membrane as a helical segment; it reads IVGSATAGLVFVVAVVVIAIV. The Cytoplasmic portion of the chain corresponds to 581-998; the sequence is CLRKQRHGSD…QMNQTLPVQV (418 aa). Y614 is subject to Phosphotyrosine; by autocatalysis. The 264-residue stretch at 633 to 896 folds into the Protein kinase domain; the sequence is VKIEEVIGAG…QIVNTLDKLI (264 aa). Residues 639 to 647 and K665 contribute to the ATP site; that span reads IGAGEFGEV. The active-site Proton acceptor is the D758. The 65-residue stretch at 925-989 folds into the SAM domain; that stretch reads TTFTTVGDWL…LSSIQDMRLQ (65 aa). A PDZ-binding motif is present at residues 996–998; that stretch reads VQV.

Belongs to the protein kinase superfamily. Tyr protein kinase family. Ephrin receptor subfamily. Heterotetramer upon binding of the ligand. The heterotetramer is composed of an ephrin dimer and a receptor dimer. Oligomerization is probably required to induce biological responses. Post-translationally, phosphorylated. Autophosphorylates upon ligand-binding. Autophosphorylation on Tyr-614 is required for interaction with SH2 domain-containing proteins. Ubiquitinated by RNF186, mainly through 'Lys-48' and 'Lys-63'-linked polyubiquitin chains. As to expression, ubiquitous.

Its subcellular location is the cell membrane. It is found in the cell projection. The protein localises to the dendrite. The enzyme catalyses L-tyrosyl-[protein] + ATP = O-phospho-L-tyrosyl-[protein] + ADP + H(+). Functionally, receptor tyrosine kinase which binds promiscuously transmembrane ephrin-B family ligands residing on adjacent cells, leading to contact-dependent bidirectional signaling into neighboring cells. The signaling pathway downstream of the receptor is referred to as forward signaling while the signaling pathway downstream of the ephrin ligand is referred to as reverse signaling. Generally has an overlapping and redundant function with EPHB2. Like EPHB2, functions in axon guidance during development regulating for instance the neurons forming the corpus callosum and the anterior commissure, 2 major interhemispheric connections between the temporal lobes of the cerebral cortex. In addition to its role in axon guidance also plays an important redundant role with other ephrin-B receptors in development and maturation of dendritic spines and the formation of excitatory synapses. Controls other aspects of development through regulation of cell migration and positioning. This includes angiogenesis, palate development and thymic epithelium development for instance. Forward and reverse signaling through the EFNB2/EPHB3 complex also regulate migration and adhesion of cells that tubularize the urethra and septate the cloaca. Finally, plays an important role in intestinal epithelium differentiation segregating progenitor from differentiated cells in the crypt. The chain is Ephrin type-B receptor 3 (EPHB3) from Homo sapiens (Human).